The primary structure comprises 671 residues: DNA polymerase kappa (671 aa).

Positions 105–285 (WLHVDMDAFY…LPVRKIGGIG (181 aa)) constitute a UmuC domain. Residues aspartate 109 and aspartate 200 each coordinate Mg(2+). Residue glutamate 201 is part of the active site. Residues 576-613 (YWIDGYKCVLCGIELPPSFVEERQEHSDFHLAQRLQNE) form a UBZ3-type zinc finger. The Zn(2+) site is built by cysteine 583, cysteine 586, histidine 601, and histidine 605. Positions 607 to 671 (AQRLQNEETG…NQNSNETQRK (65 aa)) are disordered. A Nuclear localization signal motif is present at residues 625 to 632 (KRRILGKE). Residues 629–650 (LGKEKVNSKPKKQKPDQKDSSK) show a composition bias toward basic and acidic residues. Residues 659 to 671 (TKSNQNSNETQRK) are compositionally biased toward polar residues.

It belongs to the DNA polymerase type-Y family. Mg(2+) serves as cofactor. As to expression, expressed in roots, leaves, stems, flowers and siliques. Present in endoreduplicating cells.

The protein resides in the nucleus. The catalysed reaction is DNA(n) + a 2'-deoxyribonucleoside 5'-triphosphate = DNA(n+1) + diphosphate. Its activity is regulated as follows. Unable to bypass a single 1,N(6)-ethenoadenine (epsilon-dA) or an abasic site lesions in DNA templates. Functionally, template-directed low-fidelity DNA polymerase specifically involved in DNA repair. Able to extend primer-terminal mispairs, and to insert nucleotides opposite to a single 7,8-dihydro-8-oxoGuanine (8-oxoG) lesion and moderately extend from the resulting primer end, thus leading to both error-free and error-prone bypass of 8-oxoG DNA lesions. Probably involved in consecutive DNA replication cycles in the absence of mitosis. Binds preferentially template-primer DNA substrates or single-stranded DNA. Plays an important role in translesion synthesis, where the normal high-fidelity DNA polymerases cannot proceed and DNA synthesis stalls. Depending on the context, it inserts the correct base, but causes frequent base transitions, transversions and frameshifts. The polypeptide is DNA polymerase kappa (Arabidopsis thaliana (Mouse-ear cress)).